A 110-amino-acid chain; its full sequence is Spermatid nuclear transition protein 3 (110 aa).

The disordered stretch occupies residues 80–110 (RSCAREKLNQSRKRYQNMRQSQRRGQNQKRR).

The protein resides in the nucleus. The protein localises to the chromosome. Functionally, involved in nuclear basic protein transition: histones are replaced by spermatid specific proteins which are themselves replaced by protamines in late spermatids. In Ovis aries (Sheep), this protein is Spermatid nuclear transition protein 3.